Consider the following 400-residue polypeptide: Small ribosomal subunit protein bS1 (400 aa).

S1 motif domains are found at residues 17–87 (GDVV…VTYL), 107–173 (EEVV…LSRR), 194–262 (GDVV…LSLK), and 279–348 (GDVV…LSIK). The span at 351–366 (EERPAQEEGQKEEKRA) shows a compositional bias: basic and acidic residues. Residues 351-400 (EERPAQEEGQKEEKRAARPRRPRRQEKRDFELPETQTGFSMADLFGDIEL) form a disordered region.

Belongs to the bacterial ribosomal protein bS1 family. In terms of processing, phosphorylated.

In terms of biological role, binds mRNA; thus facilitating recognition of the initiation point. It is needed to translate mRNA with a short Shine-Dalgarno (SD) purine-rich sequence. This Streptococcus pneumoniae (strain ATCC BAA-255 / R6) protein is Small ribosomal subunit protein bS1 (rpsA).